Consider the following 329-residue polypeptide: uncharacterized protein (329 aa).

In terms of domain architecture, SIS spans 38–184 (IVKLILKSQE…MACLMRAKNF (147 aa)). 56–61 (GVGKSA) lines the ATP pocket. CBS domains are found at residues 211 to 267 (QTTN…GVSL) and 270 to 329 (EVRH…GLKA).

The protein belongs to the SIS family. GutQ/KpsF subfamily.

This is an uncharacterized protein from Helicobacter pylori (strain ATCC 700392 / 26695) (Campylobacter pylori).